The following is a 1016-amino-acid chain: FHIP family protein Bm1_18400 (1016 aa).

Disordered stretches follow at residues 586-608 (DSLR…RSSF) and 757-778 (SDGF…PLGK).

Belongs to the FHIP family.

In Brugia malayi (Filarial nematode worm), this protein is FHIP family protein Bm1_18400.